Consider the following 492-residue polypeptide: Probable small intestine urate exporter (492 aa).

Residues 1–20 (MSTGADLKAREGDIPSDNMT) are disordered. N-linked (GlcNAc...) asparagine glycosylation is found at asparagine 18, asparagine 44, asparagine 53, asparagine 63, asparagine 72, and asparagine 87. A run of 11 helical transmembrane segments spans residues 112–132 (LSYG…VFGA), 134–154 (YVVG…PLAA), 156–176 (AGVA…VMVL), 198–218 (IAAS…GLIC), 225–245 (YIFY…FPLV), 287–307 (LPLW…STVM), 327–347 (ILSA…GLLA), 363–383 (KLFT…LPWV), 393–413 (FLVL…INFL), 426–446 (LLQV…GFFI), and 456–476 (NVFF…LIFS).

It belongs to the major facilitator superfamily. Sodium/anion cotransporter family. In terms of tissue distribution, expressed in the small intestine (at protein level).

It is found in the apical cell membrane. The enzyme catalyses 3 Na(+)(out) + phosphate(out) = 3 Na(+)(in) + phosphate(in). It carries out the reaction urate(out) + n chloride(in) = urate(in) + n chloride(out). The catalysed reaction is L-thyroxine(out) = L-thyroxine(in). It catalyses the reaction 3,3',5-triiodo-L-thyronine(out) = 3,3',5-triiodo-L-thyronine(in). Acts as a membrane potential-dependent organic anion transporter, the transport requires a low concentration of chloride ions. Mediates chloride-dependent transport of urate. Mediates sodium-independent high affinity transport of thyroid hormones including L-thyroxine (T4) and 3,3',5-triiodo-L-thyronine (T3). Can actively transport inorganic phosphate into cells via Na(+) cotransport. In Mus musculus (Mouse), this protein is Probable small intestine urate exporter (Slc17a4).